The following is a 623-amino-acid chain: Membrane protein insertase YidC (623 aa).

Residues 8–28 (LILATGLSFLVIMVWFFLFPP) form a helical membrane-spanning segment. Residues 33–64 (TEGEPTVATQQTAVAPSATPDAPTTAVPPDAD) are disordered. The segment covering 44 to 62 (TAVAPSATPDAPTTAVPPD) has biased composition (low complexity). 4 helical membrane-spanning segments follow: residues 379–399 (MGLA…PLAY), 449–469 (LPIL…FVTI), 507–527 (TTMA…SMWL), and 543–563 (IFAW…SGLV). A compositionally biased stretch (low complexity) spans 601 to 617 (KPAAQPAGKAANDGAAP). Positions 601-623 (KPAAQPAGKAANDGAAPAKKRKP) are disordered.

It belongs to the OXA1/ALB3/YidC family. Type 1 subfamily. As to quaternary structure, interacts with the Sec translocase complex via SecD. Specifically interacts with transmembrane segments of nascent integral membrane proteins during membrane integration.

The protein localises to the cell inner membrane. Its function is as follows. Required for the insertion and/or proper folding and/or complex formation of integral membrane proteins into the membrane. Involved in integration of membrane proteins that insert both dependently and independently of the Sec translocase complex, as well as at least some lipoproteins. Aids folding of multispanning membrane proteins. The chain is Membrane protein insertase YidC from Cereibacter sphaeroides (strain KD131 / KCTC 12085) (Rhodobacter sphaeroides).